We begin with the raw amino-acid sequence, 113 residues long: UPF0122 protein MCAP_0480 (113 aa).

This sequence belongs to the UPF0122 family.

Might take part in the signal recognition particle (SRP) pathway. This is inferred from the conservation of its genetic proximity to ftsY/ffh. May be a regulatory protein. This chain is UPF0122 protein MCAP_0480, found in Mycoplasma capricolum subsp. capricolum (strain California kid / ATCC 27343 / NCTC 10154).